A 224-amino-acid polypeptide reads, in one-letter code: Serum amyloid P-component (224 aa).

A signal peptide spans 1–20 (MDKLLLWMFVFTSLLSEAFC). A Pentraxin (PTX) domain is found at 25-224 (KRKVFVFPRE…YVVIRPRVWD (200 aa)). Residue N52 is glycosylated (N-linked (GlcNAc...) asparagine). Cysteines 56 and 115 form a disulfide. D78, N79, E156, Q157, D158, and Q168 together coordinate Ca(2+).

It belongs to the pentraxin family. Homopentamer. Pentraxin (or pentaxin) have a discoid arrangement of 5 non-covalently bound subunits. Requires Ca(2+) as cofactor.

It localises to the secreted. This is Serum amyloid P-component (Apcs) from Mus musculus (Mouse).